The following is a 207-amino-acid chain: Ras-related protein Rab7A (207 aa).

GTP contacts are provided by residues 15 to 22, 63 to 67, and 125 to 128; these read GDSGVGKT, DTAGQ, and NKID. Residues C205 and C207 are each lipidated (S-geranylgeranyl cysteine). Position 207 is a cysteine methyl ester (C207).

Belongs to the small GTPase superfamily. Rab family.

It localises to the cell membrane. Protein transport. Probably involved in vesicular traffic. The polypeptide is Ras-related protein Rab7A (Mesembryanthemum crystallinum (Common ice plant)).